A 388-amino-acid polypeptide reads, in one-letter code: Oxytocin receptor (388 aa).

Positions 1–32 (MEGTPAANWSVELDLGSGVPPGEEGNRTAGPP) are disordered. Topologically, residues 1–38 (MEGTPAANWSVELDLGSGVPPGEEGNRTAGPPQRNEAL) are extracellular. N8 and N26 each carry an N-linked (GlcNAc...) asparagine glycan. The chain crosses the membrane as a helical span at residues 39-63 (ARVEVAVLCLILFLALSGNACVLLA). Over 64-74 (LRTTRHKHSRL) the chain is Cytoplasmic. A helical membrane pass occupies residues 75 to 97 (FFFMKHLSIADLVVAVFQVLPQL). Topologically, residues 98–113 (LWDITFRFYGPDLLCR) are extracellular. The cysteines at positions 112 and 187 are disulfide-linked. A helical transmembrane segment spans residues 114–135 (LVKYLQVVGMFASTYLLLLMSL). Residues 136–154 (DRCLAICQPLRSLRRRTDR) lie on the Cytoplasmic side of the membrane. A helical membrane pass occupies residues 155 to 175 (LAVLGTWLGCLVASAPQVHIF). Residues 176 to 202 (SLREVADGVFDCWAVFIQPWGPKAYVT) are Extracellular-facing. Residues 203-225 (WITLAVYIVPVIVLAACYGLISF) form a helical membrane-spanning segment. The Cytoplasmic portion of the chain corresponds to 226-274 (KIWQNLRLKTAAAAAAAEGNDAAGGAGRAALARVSSVKLISKAKIRTVK). A helical transmembrane segment spans residues 275–293 (MTFIIVLAFIVCWTPFFFV). The Extracellular segment spans residues 294 to 308 (QMWSVWDVNAPKEAS). A helical transmembrane segment spans residues 309 to 331 (AFIIAMLLASLNSCCNPWIYMLF). Topologically, residues 332-388 (TGHLFHELVQRFFCCSARYLKGSRPGETSVSKKSNSSTFVLSRRSSSQRSCSQPSSA) are cytoplasmic. The segment at 354–388 (SRPGETSVSKKSNSSTFVLSRRSSSQRSCSQPSSA) is disordered. Phosphoserine is present on residues S365 and S367. Residues 365-388 (SNSSTFVLSRRSSSQRSCSQPSSA) show a composition bias toward low complexity.

This sequence belongs to the G-protein coupled receptor 1 family. Vasopressin/oxytocin receptor subfamily.

It is found in the cell membrane. Functionally, receptor for oxytocin. The activity of this receptor is mediated by G proteins which activate a phosphatidylinositol-calcium second messenger system. The protein is Oxytocin receptor (Oxtr) of Rattus norvegicus (Rat).